We begin with the raw amino-acid sequence, 378 residues long: Cytochrome b (378 aa).

Transmembrane regions (helical) follow at residues 34 to 54 (FGSL…FLAM), 78 to 99 (WFLR…FIHV), 114 to 134 (WNTG…GYVL), and 179 to 199 (FFTF…IHLL). Residues His-84 and His-98 each coordinate heme b. Residues His-183 and His-197 each coordinate heme b. His-202 serves as a coordination point for a ubiquinone. Helical transmembrane passes span 227-247 (YKDI…IWKF), 289-309 (LGGV…PFTH), 321-341 (LNQI…WIGA), and 348-368 (YILT…INPL).

This sequence belongs to the cytochrome b family. The main subunits of complex b-c1 are: cytochrome b, cytochrome c1 and the Rieske protein. The cofactor is heme b.

The protein resides in the mitochondrion inner membrane. Component of the ubiquinol-cytochrome c reductase complex (complex III or cytochrome b-c1 complex) that is part of the mitochondrial respiratory chain. The b-c1 complex mediates electron transfer from ubiquinol to cytochrome c. Contributes to the generation of a proton gradient across the mitochondrial membrane that is then used for ATP synthesis. The sequence is that of Cytochrome b (mt:Cyt-b) from Anopheles gambiae (African malaria mosquito).